The primary structure comprises 252 residues: 2-succinyl-6-hydroxy-2,4-cyclohexadiene-1-carboxylate synthase (252 aa).

Belongs to the AB hydrolase superfamily. MenH family. Monomer.

The enzyme catalyses 5-enolpyruvoyl-6-hydroxy-2-succinyl-cyclohex-3-ene-1-carboxylate = (1R,6R)-6-hydroxy-2-succinyl-cyclohexa-2,4-diene-1-carboxylate + pyruvate. Its pathway is quinol/quinone metabolism; 1,4-dihydroxy-2-naphthoate biosynthesis; 1,4-dihydroxy-2-naphthoate from chorismate: step 3/7. It participates in quinol/quinone metabolism; menaquinone biosynthesis. Catalyzes a proton abstraction reaction that results in 2,5-elimination of pyruvate from 2-succinyl-5-enolpyruvyl-6-hydroxy-3-cyclohexene-1-carboxylate (SEPHCHC) and the formation of 2-succinyl-6-hydroxy-2,4-cyclohexadiene-1-carboxylate (SHCHC). The sequence is that of 2-succinyl-6-hydroxy-2,4-cyclohexadiene-1-carboxylate synthase from Salmonella typhi.